A 157-amino-acid chain; its full sequence is MRIGHGYDVHRFCDGDFITLGGVRIPHKYGLLAHSDGDVLLHALSDALLGAAALGDIGKHFPDTDPQFKGADSRALLRHVVGIVRAKGWKVGNVDATIVAQAPKMAPHIETMRQLIAEDLQVELDQVNVKATTTEKLGFTGREEGIAVHSVALLLPA.

Residues Asp-8 and His-10 each coordinate a divalent metal cation. 4-CDP-2-C-methyl-D-erythritol 2-phosphate is bound by residues 8–10 (DVH) and 34–35 (HS). His-42 contacts a divalent metal cation. Residues 56–58 (DIG), 61–65 (FPDTD), 100–106 (AQAPKMA), 132–135 (TTTE), Phe-139, and Arg-142 each bind 4-CDP-2-C-methyl-D-erythritol 2-phosphate.

This sequence belongs to the IspF family. Homotrimer. The cofactor is a divalent metal cation.

The enzyme catalyses 4-CDP-2-C-methyl-D-erythritol 2-phosphate = 2-C-methyl-D-erythritol 2,4-cyclic diphosphate + CMP. It functions in the pathway isoprenoid biosynthesis; isopentenyl diphosphate biosynthesis via DXP pathway; isopentenyl diphosphate from 1-deoxy-D-xylulose 5-phosphate: step 4/6. In terms of biological role, involved in the biosynthesis of isopentenyl diphosphate (IPP) and dimethylallyl diphosphate (DMAPP), two major building blocks of isoprenoid compounds. Catalyzes the conversion of 4-diphosphocytidyl-2-C-methyl-D-erythritol 2-phosphate (CDP-ME2P) to 2-C-methyl-D-erythritol 2,4-cyclodiphosphate (ME-CPP) with a corresponding release of cytidine 5-monophosphate (CMP). The protein is 2-C-methyl-D-erythritol 2,4-cyclodiphosphate synthase of Pseudomonas putida (strain GB-1).